Reading from the N-terminus, the 784-residue chain is Toll-like receptor 2 (784 aa).

A signal peptide spans 1-20 (MPRALWTAWVWAXIILSTEG). The Extracellular portion of the chain corresponds to 21–587 (ASDQASSLSC…ARLSLSECHR (567 aa)). A disulfide bond links cysteine 30 and cysteine 36. LRR repeat units follow at residues 54 to 77 (VKSL…RCVN), 78 to 101 (LKTL…HLRN), 102 to 125 (LEYL…SLYV), 126 to 150 (LKFL…HLPN), 151 to 175 (LXTL…GLTF), 176 to 199 (LEEL…SIQN), 200 to 223 (ISHL…IVSS), 224 to 250 (LDCL…MSTS), 251 to 278 (VKKL…YVSG), 279 to 308 (ILEV…HLGN), 309 to 337 (VETL…LTGK), 338 to 361 (VKRV…HLKS), 362 to 388 (LEYL…AWPF), 389 to 414 (LQTL…TLEN), 415 to 437 (LNSL…WPGK), 438 to 457 (MKQL…CLPQ), 458 to 478 (TLEI…ILPQ), 479 to 500 (LKEL…FLPV), and 501 to 524 (LSVM…SFQQ). N-linked (GlcNAc...) asparagine glycosylation is present at asparagine 114. Asparagine 199 is a glycosylation site (N-linked (GlcNAc...) asparagine). Cysteine 353 and cysteine 382 form a disulfide bridge. Residues cysteine 432 and cysteine 454 are joined by a disulfide bond. Asparagine 442 is a glycosylation site (N-linked (GlcNAc...) asparagine). Positions 525 to 579 (LKTLEAGGNNFICSCDFLSFTQGQQALGRVLVDWPDDYRCDSPSHVRGQRVQDAR) constitute an LRRCT domain. The chain crosses the membrane as a helical span at residues 588–608 (AAVVSAACCALFLVLLLTGVL). The Cytoplasmic segment spans residues 609–784 (CHRFHGLWYM…WLNLRAAIRS (176 aa)). The TIR domain occupies 639-782 (ICYDAFVSYS…GFWLNLRAAI (144 aa)). A Glycyl lysine isopeptide (Lys-Gly) (interchain with G-Cter in ubiquitin) cross-link involves residue lysine 754. The short motif at 761 to 778 (YLEWPVDETQQEGFWLNL) is the ATG16L1-binding motif element.

This sequence belongs to the Toll-like receptor family. As to quaternary structure, interacts with LY96, TLR1 and TLR6 (via extracellular domain). TLR2 seems to exist in heterodimers with either TLR1 or TLR6 before stimulation by the ligand. The heterodimers form bigger oligomers in response to their corresponding ligands as well as further heterotypic associations with other receptors such as CD14 and/or CD36. Binds MYD88 (via TIR domain). Interacts with TICAM1. Interacts with CNPY3. Interacts with ATG16L1. Interacts with PPP1R11. Interacts with TICAM2. Interacts with TIRAP. In terms of processing, ubiquitinated at Lys-754 by PPP1R11, leading to its degradation. Deubiquitinated by USP2. Post-translationally, glycosylation of Asn-442 is critical for secretion of the N-terminal ectodomain of TLR2.

Its subcellular location is the membrane. It localises to the cytoplasmic vesicle. The protein resides in the phagosome membrane. It is found in the membrane raft. Functionally, cooperates with LY96 to mediate the innate immune response to bacterial lipoproteins and other microbial cell wall components. Cooperates with TLR1 or TLR6 to mediate the innate immune response to bacterial lipoproteins or lipopeptides. Acts via MYD88 and TRAF6, leading to NF-kappa-B activation, cytokine secretion and the inflammatory response. May also promote apoptosis in response to lipoproteins. Forms activation clusters composed of several receptors depending on the ligand, these clusters trigger signaling from the cell surface and subsequently are targeted to the Golgi in a lipid-raft dependent pathway. Forms the cluster TLR2:TLR6:CD14:CD36 in response to diacylated lipopeptides and TLR2:TLR1:CD14 in response to triacylated lipopeptides. In Bison bison (American bison), this protein is Toll-like receptor 2 (TLR2).